The sequence spans 179 residues: Large ribosomal subunit protein uL6 (179 aa).

The protein belongs to the universal ribosomal protein uL6 family. Part of the 50S ribosomal subunit.

In terms of biological role, this protein binds to the 23S rRNA, and is important in its secondary structure. It is located near the subunit interface in the base of the L7/L12 stalk, and near the tRNA binding site of the peptidyltransferase center. The protein is Large ribosomal subunit protein uL6 of Chlorobium limicola (strain DSM 245 / NBRC 103803 / 6330).